The chain runs to 159 residues: Ribosomal RNA large subunit methyltransferase H (159 aa).

Residues Leu76, Gly108, and 127-132 contribute to the S-adenosyl-L-methionine site; that span reads FSKMTF.

It belongs to the RNA methyltransferase RlmH family. In terms of assembly, homodimer.

It is found in the cytoplasm. It catalyses the reaction pseudouridine(1915) in 23S rRNA + S-adenosyl-L-methionine = N(3)-methylpseudouridine(1915) in 23S rRNA + S-adenosyl-L-homocysteine + H(+). In terms of biological role, specifically methylates the pseudouridine at position 1915 (m3Psi1915) in 23S rRNA. The sequence is that of Ribosomal RNA large subunit methyltransferase H from Bacillus velezensis (strain DSM 23117 / BGSC 10A6 / LMG 26770 / FZB42) (Bacillus amyloliquefaciens subsp. plantarum).